Here is a 326-residue protein sequence, read N- to C-terminus: F-box/LRR-repeat protein 12 (326 aa).

Positions 1-47 (MATFADLPDSVLLEIFSYLPVRDRIRISRVCHHWKKLVDDRWLWRHV) constitute an F-box domain. LRR repeat units follow at residues 51 to 78 (LYTMRPKVMWHLLRRYMASRLHSLRMGG), 86 to 111 (APQLSPALMRALGQKCPNLKRLCLHV), 161 to 185 (VPAFRDEHLQGLTRFRALRSLVLGG), 186 to 211 (TYRVTETGLDMGLQELNYLQRLEVLG), 212 to 236 (CTLSADSTLLAISRHLRDVRKIRLT), 237 to 261 (VRGLSAPGLSVLEGMPALESLCLLG), and 266 to 291 (PEMPSPQEILASCLTMPKLRVLELQG).

Interacts with SKP1 and CUL1.

The protein operates within protein modification; protein ubiquitination. Functionally, substrate-recognition component of the SCF (SKP1-CUL1-F-box protein)-type E3 ubiquitin ligase complex. Mediates the polyubiquitination and proteasomal degradation of CAMK1 leading to disruption of cyclin D1/CDK4 complex assembly which results in G1 cell cycle arrest in lung epithelia. This is F-box/LRR-repeat protein 12 (FBXL12) from Bos taurus (Bovine).